The following is a 348-amino-acid chain: UDP-3-O-acylglucosamine N-acyltransferase (348 aa).

The active-site Proton acceptor is the His248.

The protein belongs to the transferase hexapeptide repeat family. LpxD subfamily. As to quaternary structure, homotrimer.

It carries out the reaction a UDP-3-O-[(3R)-3-hydroxyacyl]-alpha-D-glucosamine + a (3R)-hydroxyacyl-[ACP] = a UDP-2-N,3-O-bis[(3R)-3-hydroxyacyl]-alpha-D-glucosamine + holo-[ACP] + H(+). Its pathway is bacterial outer membrane biogenesis; LPS lipid A biosynthesis. Its function is as follows. Catalyzes the N-acylation of UDP-3-O-acylglucosamine using 3-hydroxyacyl-ACP as the acyl donor. Is involved in the biosynthesis of lipid A, a phosphorylated glycolipid that anchors the lipopolysaccharide to the outer membrane of the cell. This Rippkaea orientalis (strain PCC 8801 / RF-1) (Cyanothece sp. (strain PCC 8801)) protein is UDP-3-O-acylglucosamine N-acyltransferase.